We begin with the raw amino-acid sequence, 504 residues long: Maturase K (504 aa).

This sequence belongs to the intron maturase 2 family. MatK subfamily.

It localises to the plastid. Its subcellular location is the chloroplast. Functionally, usually encoded in the trnK tRNA gene intron. Probably assists in splicing its own and other chloroplast group II introns. In Lepidium virginicum (Virginia pepperweed), this protein is Maturase K.